Reading from the N-terminus, the 175-residue chain is Adenine phosphoribosyltransferase (175 aa).

This sequence belongs to the purine/pyrimidine phosphoribosyltransferase family. Homodimer.

The protein localises to the cytoplasm. The enzyme catalyses AMP + diphosphate = 5-phospho-alpha-D-ribose 1-diphosphate + adenine. It participates in purine metabolism; AMP biosynthesis via salvage pathway; AMP from adenine: step 1/1. Its function is as follows. Catalyzes a salvage reaction resulting in the formation of AMP, that is energically less costly than de novo synthesis. The chain is Adenine phosphoribosyltransferase from Lactobacillus acidophilus (strain ATCC 700396 / NCK56 / N2 / NCFM).